Reading from the N-terminus, the 435-residue chain is Transmembrane protein 130 (435 aa).

The first 24 residues, 1–24 (MAQAVWSRLGRILWLACLLPWAPA), serve as a signal peptide directing secretion. Over 25 to 339 (GVAAGLYELN…IQVWPSRIQP (315 aa)) the chain is Extracellular. Residues Asn-34, Asn-197, and Asn-300 are each glycosylated (N-linked (GlcNAc...) asparagine). A PKD domain is found at 147-233 (WPSSYLTKTV…AVKQKTGDFS (87 aa)). A helical membrane pass occupies residues 340–360 (AVFAFPCATLITVMLAFIMYM). The Cytoplasmic segment spans residues 361 to 435 (TLRNATQQKD…LYKSVKTYTV (75 aa)).

It localises to the golgi apparatus membrane. The chain is Transmembrane protein 130 (TMEM130) from Homo sapiens (Human).